Here is a 134-residue protein sequence, read N- to C-terminus: Large ribosomal subunit protein uL16 (134 aa).

Basic residues predominate over residues 1–20; it reads MLLQPKRTKFRKMHKGRNRG. The segment at 1-21 is disordered; sequence MLLQPKRTKFRKMHKGRNRGT.

This sequence belongs to the universal ribosomal protein uL16 family. In terms of assembly, part of the 50S ribosomal subunit.

Functionally, binds 23S rRNA and is also seen to make contacts with the A and possibly P site tRNAs. This is Large ribosomal subunit protein uL16 from Blochmanniella pennsylvanica (strain BPEN).